The sequence spans 462 residues: Asparagine--tRNA ligase (462 aa).

It belongs to the class-II aminoacyl-tRNA synthetase family. Homodimer.

It is found in the cytoplasm. It carries out the reaction tRNA(Asn) + L-asparagine + ATP = L-asparaginyl-tRNA(Asn) + AMP + diphosphate + H(+). The chain is Asparagine--tRNA ligase from Borrelia garinii subsp. bavariensis (strain ATCC BAA-2496 / DSM 23469 / PBi) (Borreliella bavariensis).